The chain runs to 357 residues: Geranylgeranyl pyrophosphate synthase, chloroplastic (357 aa).

A chloroplast-targeting transit peptide spans 1 to 40 (MRSNLCHPLKNQLPISFFLSGTIRKPIFSCSRLSISAIIT). 3 residues coordinate isopentenyl diphosphate: K106, R109, and H138. Residues D145 and D151 each coordinate Mg(2+). Position 156 (R156) interacts with dimethylallyl diphosphate. Residue R157 coordinates isopentenyl diphosphate. Dimethylallyl diphosphate contacts are provided by K242, T243, Q280, K297, and K307.

Belongs to the FPP/GGPP synthase family. Mg(2+) is required as a cofactor.

It is found in the plastid. It localises to the chloroplast. It carries out the reaction isopentenyl diphosphate + dimethylallyl diphosphate = (2E)-geranyl diphosphate + diphosphate. The enzyme catalyses isopentenyl diphosphate + (2E)-geranyl diphosphate = (2E,6E)-farnesyl diphosphate + diphosphate. It catalyses the reaction isopentenyl diphosphate + (2E,6E)-farnesyl diphosphate = (2E,6E,10E)-geranylgeranyl diphosphate + diphosphate. Its pathway is isoprenoid biosynthesis; farnesyl diphosphate biosynthesis; farnesyl diphosphate from geranyl diphosphate and isopentenyl diphosphate: step 1/1. It functions in the pathway isoprenoid biosynthesis; geranyl diphosphate biosynthesis; geranyl diphosphate from dimethylallyl diphosphate and isopentenyl diphosphate: step 1/1. It participates in isoprenoid biosynthesis; geranylgeranyl diphosphate biosynthesis; geranylgeranyl diphosphate from farnesyl diphosphate and isopentenyl diphosphate: step 1/1. Catalyzes the trans-addition of the three molecules of IPP onto DMAPP to form geranylgeranyl pyrophosphate. This chain is Geranylgeranyl pyrophosphate synthase, chloroplastic (GGPS1), found in Catharanthus roseus (Madagascar periwinkle).